The chain runs to 299 residues: Nicotinate-nucleotide pyrophosphorylase [carboxylating] (299 aa).

The important for hexamer formation stretch occupies residues 8–12 (FLLPP). Quinolinate is bound by residues Arg102, 138–139 (RK), 160–161 (HR), Lys171, Glu201, Asp222, 248–250 (SGG), and Gly270.

It belongs to the NadC/ModD family. As to quaternary structure, hexamer formed by 3 homodimers.

The catalysed reaction is nicotinate beta-D-ribonucleotide + CO2 + diphosphate = quinolinate + 5-phospho-alpha-D-ribose 1-diphosphate + 2 H(+). It functions in the pathway cofactor biosynthesis; NAD(+) biosynthesis; nicotinate D-ribonucleotide from quinolinate: step 1/1. In terms of biological role, involved in the catabolism of quinolinic acid (QA). The chain is Nicotinate-nucleotide pyrophosphorylase [carboxylating] (Qprt) from Rattus norvegicus (Rat).